Here is a 174-residue protein sequence, read N- to C-terminus: NADH-ubiquinone oxidoreductase chain 6 (174 aa).

5 helical membrane-spanning segments follow: residues 1–21, 24–44, 47–67, 86–106, and 151–171; these read MTYV…GFSS, SPIY…AIIL, GGGY…MVVF, VEVL…VLWV, and WLVV…IEIA.

It belongs to the complex I subunit 6 family. As to quaternary structure, core subunit of respiratory chain NADH dehydrogenase (Complex I) which is composed of 45 different subunits.

It localises to the mitochondrion inner membrane. It carries out the reaction a ubiquinone + NADH + 5 H(+)(in) = a ubiquinol + NAD(+) + 4 H(+)(out). Functionally, core subunit of the mitochondrial membrane respiratory chain NADH dehydrogenase (Complex I) which catalyzes electron transfer from NADH through the respiratory chain, using ubiquinone as an electron acceptor. Essential for the catalytic activity and assembly of complex I. The polypeptide is NADH-ubiquinone oxidoreductase chain 6 (MT-ND6) (Gorilla gorilla gorilla (Western lowland gorilla)).